The following is an 806-amino-acid chain: Phenylalanine--tRNA ligase beta subunit (806 aa).

Residues N40–L155 form the tRNA-binding domain. The B5 domain occupies V409–V484. The Mg(2+) site is built by D462, D468, E471, and E472. An FDX-ACB domain is found at P712–R805.

This sequence belongs to the phenylalanyl-tRNA synthetase beta subunit family. Type 1 subfamily. As to quaternary structure, tetramer of two alpha and two beta subunits. The cofactor is Mg(2+).

The protein localises to the cytoplasm. The catalysed reaction is tRNA(Phe) + L-phenylalanine + ATP = L-phenylalanyl-tRNA(Phe) + AMP + diphosphate + H(+). This Bacillus thuringiensis subsp. konkukian (strain 97-27) protein is Phenylalanine--tRNA ligase beta subunit.